The sequence spans 188 residues: Pyridoxal 5'-phosphate synthase subunit PdxT (188 aa).

46–48 (GES) contributes to the L-glutamine binding site. Cysteine 78 functions as the Nucleophile in the catalytic mechanism. Residues arginine 105 and 134–135 (IR) contribute to the L-glutamine site. Residues histidine 170 and glutamate 172 each act as charge relay system in the active site.

Belongs to the glutaminase PdxT/SNO family. In terms of assembly, in the presence of PdxS, forms a dodecamer of heterodimers. Only shows activity in the heterodimer.

It catalyses the reaction aldehydo-D-ribose 5-phosphate + D-glyceraldehyde 3-phosphate + L-glutamine = pyridoxal 5'-phosphate + L-glutamate + phosphate + 3 H2O + H(+). The enzyme catalyses L-glutamine + H2O = L-glutamate + NH4(+). It participates in cofactor biosynthesis; pyridoxal 5'-phosphate biosynthesis. Catalyzes the hydrolysis of glutamine to glutamate and ammonia as part of the biosynthesis of pyridoxal 5'-phosphate. The resulting ammonia molecule is channeled to the active site of PdxS. The protein is Pyridoxal 5'-phosphate synthase subunit PdxT of Thermotoga sp. (strain RQ2).